A 227-amino-acid polypeptide reads, in one-letter code: ATP synthase F(0) complex subunit a (227 aa).

Helical transmembrane passes span L14–P34, W69–L89, Q98–L118, I139–V159, L174–A194, and V196–V216.

Belongs to the ATPase A chain family. Component of the ATP synthase complex composed at least of ATP5F1A/subunit alpha, ATP5F1B/subunit beta, ATP5MC1/subunit c (homooctomer), MT-ATP6/subunit a, MT-ATP8/subunit 8, ATP5ME/subunit e, ATP5MF/subunit f, ATP5MG/subunit g, ATP5MK/subunit k, ATP5MJ/subunit j, ATP5F1C/subunit gamma, ATP5F1D/subunit delta, ATP5F1E/subunit epsilon, ATP5PF/subunit F6, ATP5PB/subunit b, ATP5PD/subunit d, ATP5PO/subunit OSCP. ATP synthase complex consists of a soluble F(1) head domain (subunits alpha(3) and beta(3)) - the catalytic core - and a membrane F(0) domain - the membrane proton channel (subunits c, a, 8, e, f, g, k and j). These two domains are linked by a central stalk (subunits gamma, delta, and epsilon) rotating inside the F1 region and a stationary peripheral stalk (subunits F6, b, d, and OSCP). Interacts with DNAJC30; interaction is direct.

The protein resides in the mitochondrion inner membrane. It catalyses the reaction H(+)(in) = H(+)(out). In terms of biological role, subunit a, of the mitochondrial membrane ATP synthase complex (F(1)F(0) ATP synthase or Complex V) that produces ATP from ADP in the presence of a proton gradient across the membrane which is generated by electron transport complexes of the respiratory chain. ATP synthase complex consist of a soluble F(1) head domain - the catalytic core - and a membrane F(1) domain - the membrane proton channel. These two domains are linked by a central stalk rotating inside the F(1) region and a stationary peripheral stalk. During catalysis, ATP synthesis in the catalytic domain of F(1) is coupled via a rotary mechanism of the central stalk subunits to proton translocation. With the subunit c (ATP5MC1), forms the proton-conducting channel in the F(0) domain, that contains two crucial half-channels (inlet and outlet) that facilitate proton movement from the mitochondrial intermembrane space (IMS) into the matrix. Protons are taken up via the inlet half-channel and released through the outlet half-channel, following a Grotthuss mechanism. The sequence is that of ATP synthase F(0) complex subunit a from Struthio camelus (Common ostrich).